Consider the following 85-residue polypeptide: MSNYEILDKIRERIEKEFIMARQSRIDVVLMPMNEYSGYFYTIYTVEYTDVSNEFSSVMLTQGEYIILKNSVLVKIGDKVKQLEL.

This is an uncharacterized protein from Acidianus filamentous virus 2 (isolate Italy/Pozzuoli) (AFV-2).